The chain runs to 1159 residues: Caspase recruitment domain-containing protein 11 (1159 aa).

In terms of domain architecture, CARD spans 18 to 110; it reads EEEALWDNVE…ELYKLVTGKE (93 aa). The interval 111 to 128 is linker; the sequence is PTRRFSTIVVEEGHEGLT. Residues 176-449 are a coiled coil; sequence FQERYYKMKE…KDNGSLDQSL (274 aa). The disordered stretch occupies residues 441 to 496; it reads DNGSLDQSLPRHLPATIISQNLGDTSPRTNGQEADDSSTSEESPEDSKYFLPYHPP. 2 positions are modified to phosphoserine: S448 and S466. The segment at 450–671 is inhibitory domain (ID); the sequence is PRHLPATIIS…GHVRGTGPLV (222 aa). Residues 457–472 are compositionally biased toward polar residues; that stretch reads IISQNLGDTSPRTNGQ. A compositionally biased stretch (acidic residues) spans 473–484; that stretch reads EADDSSTSEESP. Residues S512 and S540 each carry the phosphoserine modification. The disordered stretch occupies residues 532–578; sequence HEEDFTDGSPSSSRSLPVTSSFSKMQPHRSRSSIMSITAEPPGNDSI. Over residues 540–554 the composition is skewed to low complexity; that stretch reads SPSSSRSLPVTSSFS. S564 carries the post-translational modification Phosphoserine; by PKC/PRKCB and PKC/PRKCQ. Phosphoserine is present on S598. The interval 610-631 is disordered; it reads NHERYSFGPPSIHSSSSSHQSE. The span at 620 to 630 shows a compositional bias: low complexity; it reads SIHSSSSSHQS. 2 positions are modified to phosphoserine; by PKC/PRKCB and PKC/PRKCQ: S649 and S657. The PDZ domain maps to 672–760; the sequence is QHTTLNGDGL…LITLHYKVNH (89 aa). A phosphoserine mark is found at S891 and S930. In terms of domain architecture, Guanylate kinase-like spans 978-1145; the sequence is RRRPVLFTPT…LLRVLKDKIV (168 aa).

Homodimer; disulfide-linked. Homomultimer; polymerizes following activation, forming a nucleating helical template that seeds BCL10-filament formation via a CARD-CARD interaction. Interacts (via CARD domain) with BCL10 (via CARD domain); interaction takes place following CARD11 activation and polymerization, leading to the formation of a filamentous CBM complex assembly. Component of a CBM complex (CARD11-BCL10-MALT1) complex involved in NF-kappa-B activation. Found in a membrane raft complex, at least composed of BCL10, CARD11, DPP4 and IKBKB. Interacts (via PDZ domain) with DPP4 (via cytoplasmic tail). Phosphorylation at Ser-564, Ser-649 and Ser-657 by PRKCB and PRKCQ leads to a shift from an inactive to an active form that activates the NF-kappa-B signaling.

It is found in the cytoplasm. Its subcellular location is the membrane raft. Its activity is regulated as follows. Maintained in an autoinhibited state via homodimerization in which the CARD domain forms an extensive interaction with the adjacent linker and coiled-coil regions. Activation downstream of T-cell receptor (TCR) by phosphorylation by PRKCB and PRKCQ triggers CARD11 homooligomerization and BCL10 recruitment, followed by activation of NF-kappa-B. Functionally, adapter protein that plays a key role in adaptive immune response by transducing the activation of NF-kappa-B downstream of T-cell receptor (TCR) and B-cell receptor (BCR) engagement. Transduces signals downstream TCR or BCR activation via the formation of a multiprotein complex together with BCL10 and MALT1 that induces NF-kappa-B and MAP kinase p38 (MAPK11, MAPK12, MAPK13 and/or MAPK14) pathways. Upon activation in response to TCR or BCR triggering, CARD11 homooligomerizes to form a nucleating helical template that recruits BCL10 via CARD-CARD interaction, thereby promoting polymerization of BCL10 and subsequent recruitment of MALT1: this leads to I-kappa-B kinase (IKK) phosphorylation and degradation, and release of NF-kappa-B proteins for nuclear translocation. Its binding to DPP4 induces T-cell proliferation and NF-kappa-B activation in a T-cell receptor/CD3-dependent manner. Promotes linear ubiquitination of BCL10 by promoting the targeting of BCL10 to RNF31/HOIP. Stimulates the phosphorylation of BCL10. Also activates the TORC1 signaling pathway. The chain is Caspase recruitment domain-containing protein 11 from Mus musculus (Mouse).